The sequence spans 619 residues: Chaperone protein HscA homolog (619 aa).

The protein belongs to the heat shock protein 70 family.

In terms of biological role, chaperone involved in the maturation of iron-sulfur cluster-containing proteins. Has a low intrinsic ATPase activity which is markedly stimulated by HscB. This Azotobacter vinelandii protein is Chaperone protein HscA homolog.